Here is a 129-residue protein sequence, read N- to C-terminus: Small ribosomal subunit protein uS8 (129 aa).

It belongs to the universal ribosomal protein uS8 family. Part of the 30S ribosomal subunit.

Its function is as follows. One of the primary rRNA binding proteins, it binds directly to 16S rRNA central domain where it helps coordinate assembly of the platform of the 30S subunit. The sequence is that of Small ribosomal subunit protein uS8 from Methanothrix thermoacetophila (strain DSM 6194 / JCM 14653 / NBRC 101360 / PT) (Methanosaeta thermophila).